The primary structure comprises 182 residues: UPF0148 protein VNG_2366C (182 aa).

The disordered stretch occupies residues 1-162 (MSNTDDGFDK…RASDADDPRT (162 aa)). Basic and acidic residues-rich tracts occupy residues 7–33 (GFDK…ETAR) and 47–62 (DHCD…HDGE). The span at 105 to 122 (PDTSSSTAAATDDVPTAA) shows a compositional bias: low complexity. Residues 153 to 162 (RASDADDPRT) show a composition bias toward basic and acidic residues.

The protein belongs to the UPF0148 family.

The protein is UPF0148 protein VNG_2366C of Halobacterium salinarum (strain ATCC 700922 / JCM 11081 / NRC-1) (Halobacterium halobium).